The chain runs to 257 residues: Glutamate racemase (257 aa).

Substrate contacts are provided by residues 12–13 (DS) and 44–45 (YG). The Proton donor/acceptor role is filled by cysteine 75. 76–77 (NT) is a substrate binding site. Residue cysteine 185 is the Proton donor/acceptor of the active site. 186 to 187 (TH) contributes to the substrate binding site.

It belongs to the aspartate/glutamate racemases family.

It catalyses the reaction L-glutamate = D-glutamate. The protein operates within cell wall biogenesis; peptidoglycan biosynthesis. Functionally, provides the (R)-glutamate required for cell wall biosynthesis. The protein is Glutamate racemase of Clostridium botulinum (strain Okra / Type B1).